The chain runs to 89 residues: MATKKAGGSSKNGRDSAGRRLGLKKSDGQLVNAGNIIVKQRGTKFYPGKNVGLGKDHTIFSLVSGKVKFFRKKKNRVFISVVVDDSTAA.

The interval 1-26 (MATKKAGGSSKNGRDSAGRRLGLKKS) is disordered.

The protein belongs to the bacterial ribosomal protein bL27 family.

The chain is Large ribosomal subunit protein bL27 from Orientia tsutsugamushi (strain Ikeda) (Rickettsia tsutsugamushi).